A 1350-amino-acid polypeptide reads, in one-letter code: MPTFGSKLLACLLLSSVILVSGQFEHYLDSLRASELYEFEDGSLGSIHLLPKGDSETIVLQLEQPIHFYGEQYEQLYINTNGILTFNSEFPEYLNQPFPLEYASIAAFYSNVDTSFSDEGTSISLFESKEQSILDRASSLVRYAFSSQSEFEARQVIVATWRNVGYFDSKTDRLNTFQVALIANEQSTFVQFIYPDGGLNWLQGETAGLGLPDIRAQAGFVAEDGRFYTLNGSGSENARFLSESTNLGVPGVWLFEVAPIENEQNVRSPDNAESLTESPALALSCQAHAHQCHEKAECHDKAEGYCCVCGSGFYGNGKSCLANDQPIRVTGTLTGELNKQPVSEEAKLQSYVVTSEGRTYTTINPLTPELGAQLRLVLPLLTTVPWLFAKSVGGVANGYQLTGGVYTHVSRLQFDSGENLHVNQTFEGLNYWDQLSVKIEIYGEVPAVAADAVLILPDYVEEYTFERPGELKSVQVLNINITEEQRVLGLQVEQRILYRSCLRDDEADPSATKVLQKISKVALDYVERDQALRIGAMSKVGVTPESNACNDGTADCVENSVCVPYEDTYRCDCYHGFAAQLDERGVEVCLDIDECATGSHVCDENAVCDNTEGGFNCYCTEGFEGNGYRCLSNSTADNIEYPPAVEGQAEPTSEPSPNPSPYPDQGQDQEREREDDQYPQPNPYPYPEEQIPQHPDECYRCSKDADCYQGRCTCHEGFDGDGYTCTNICGHGEVWENGRCEPLLLERHDVDPLCDALGECRCPYGYELSEDSQRCTYVQEFDGERNADLIPCDVDENCHINATCNWYGQELRHICTCQPGFRGDGYNCDPISDDSCAIRPDICDVHADCVYEEHLGKSECQCQAGYTGNGFNCQLAAECQSAEHCGENAFCDDGVCRCQADFERDVSDRCVPAGRCGSVFCGSNAICKWDSAEGVQYCDCLDGYQGDALTGCTSKPLSCHVLNNCGIHATCEPTEDPANYECQCIAGFKGDGYVCIEEQNCLNNPTLCDMNAQCRSTNSGLVCVCNQGFFGNGSLCQERQHQDSDFLIVSQGVMIARVPLNGRNVRPISVAQMAIGLDKDCVEGRVYWGDISTKKIVSTKYDGTDLRPFITTDIESPEGIAIDVISRRLYWADSAKDTIEVASLDDPSLRAVIINKQLVNPRGIAVDPYREKLFWSDWDRESPKIEMSNLDGTGRELLLGKDDVTLPNSLVVLENSGEVCYADAGTKKVECIEPQNRQIRTISNELSYPFGITFTHDQFYWTDWTTKKVEIVDSLGARQTPIQPPFFGSHKMYGMTVVEQHCPQYQSPCQISNGGCTDSRLCLVNRQAPSGKSCKCTSASTGCTVLAPGY.

The N-terminal stretch at 1-22 is a signal peptide; sequence MPTFGSKLLACLLLSSVILVSG. An NIDO domain is found at 107 to 260; it reads AFYSNVDTSF…GVWLFEVAPI (154 aa). Residue asparagine 231 is glycosylated (N-linked (GlcNAc...) asparagine). In terms of domain architecture, EGF-like 1 spans 281-321; sequence LALSCQAHAHQCHEKAECHDKAEGYCCVCGSGFYGNGKSCL. Disulfide bonds link cysteine 285–cysteine 298, cysteine 292–cysteine 307, and cysteine 309–cysteine 320. The Nidogen G2 beta-barrel domain maps to 325 to 550; the sequence is QPIRVTGTLT…GVTPESNACN (226 aa). N-linked (GlcNAc...) asparagine glycosylation is found at asparagine 423 and asparagine 480. Residues 545 to 583 form the EGF-like 2 domain; the sequence is ESNACNDGTADCVENSVCVPYEDTYRCDCYHGFAAQLDE. 5 disulfide bridges follow: cysteine 549-cysteine 562, cysteine 556-cysteine 571, cysteine 595-cysteine 608, cysteine 602-cysteine 617, and cysteine 619-cysteine 630. Positions 591 to 631 constitute an EGF-like 3; calcium-binding domain; sequence DIDECATGSHVCDENAVCDNTEGGFNCYCTEGFEGNGYRCL. Asparagine 633 carries an N-linked (GlcNAc...) asparagine glycan. The segment at 645 to 691 is disordered; the sequence is VEGQAEPTSEPSPNPSPYPDQGQDQEREREDDQYPQPNPYPYPEEQI. EGF-like domains follow at residues 788–829, 832–874, 912–953, 955–996, and 997–1037; these read DLIP…YNCD, SDDS…FNCQ, PAGR…TGCT, KPLS…YVCI, and EEQN…SLCQ. Cystine bridges form between cysteine 792-cysteine 804, cysteine 798-cysteine 815, cysteine 817-cysteine 828, cysteine 836-cysteine 849, cysteine 843-cysteine 860, cysteine 862-cysteine 873, cysteine 916-cysteine 927, cysteine 921-cysteine 938, cysteine 940-cysteine 952, cysteine 959-cysteine 971, cysteine 965-cysteine 982, cysteine 984-cysteine 995, cysteine 1001-cysteine 1014, cysteine 1008-cysteine 1023, and cysteine 1025-cysteine 1036. A glycan (N-linked (GlcNAc...) asparagine) is linked at asparagine 801. A glycan (N-linked (GlcNAc...) asparagine) is linked at asparagine 1032. LDL-receptor class B repeat units lie at residues 1084 to 1126, 1127 to 1170, 1171 to 1216, and 1257 to 1282; these read GRVY…DVIS, RRLY…DPYR, EKLF…LENS, and DQFY…QTPI.

Expressed in the basement membrane around the follicular epithelium of the adult ovary (at protein level).

The protein localises to the secreted. Its subcellular location is the extracellular space. It is found in the extracellular matrix. The protein resides in the basement membrane. Cell adhesion glycoprotein which is widely distributed in basement membranes. Involved in cell-extracellular matrix (ECM) interactions probably by connecting the laminin and collagen IV networks. Required for permeability and mechanical stability of basement membranes, and ECM dependent neural plasticity. Not involved in assembly of the embryonic basement membrane. The chain is Nidogen from Drosophila melanogaster (Fruit fly).